The following is a 489-amino-acid chain: Protein SOF1 (489 aa).

WD repeat units lie at residues Gly-65–Ser-105, Val-113–Lys-158, Asp-177–Asp-214, Trp-217–Lys-257, Val-259–Asn-299, Asp-303–Ile-342, and Lys-346–Val-385. 2 stretches are compositionally biased toward basic and acidic residues: residues Arg-440–Lys-459 and His-466–Lys-489. A disordered region spans residues Arg-440–Lys-489.

The protein belongs to the WD repeat DCAF13/WDSOF1 family. In terms of assembly, interacts with snoRNA U3. Interacts with NOP1 and MPP10. Component of the ribosomal small subunit (SSU) processome composed of at least 40 protein subunits and snoRNA U3.

The protein localises to the nucleus. It localises to the nucleolus. Required for ribosomal RNA processing. This Saccharomyces cerevisiae (strain ATCC 204508 / S288c) (Baker's yeast) protein is Protein SOF1 (SOF1).